We begin with the raw amino-acid sequence, 486 residues long: MVESYKKIGSCNKMPCLVILTCIIMSNSLVNNNNMVQAKMTWTMKAAEEAEAVANINCSEHGRAFLDGIISEGSPKCECNTCYTGPDCSEKIQGCSADVASGDGLFLEEYWKQHKEASAVLVSPWHRMSYFFNPVSNFISFELEKTIKELHEVVGNAAAKDRYIVFGVGVTQLIHGLVISLSPNMTATPDAPESKVVAHAPFYPVFREQTKYFNKKGYVWAGNAANYVNVSNPEQYIEMVTSPNNPEGLLRHAVIKGCKSIYDMVYYWPHYTPIKYKADEDILLFTMSKFTGHSGSRFGWALIKDESVYNNLLNYMTKNTEGTPRETQLRSLKVLKEVVAMVKTQKGTMRDLNTFGFKKLRERWVNITALLDQSDRFSYQELPQSEYCNYFRRMRPPSPSYAWVKCEWEEDKDCYQTFQNGRINTQNGVGFEASSRYVRLSLIKTQDDFDQLMYYLKDMVKAKRKTPLIKQLFIDQTETASRRPFI.

An N-terminal signal peptide occupies residues 1–28; it reads MVESYKKIGSCNKMPCLVILTCIIMSNS. Residues 29 to 38 constitute a propeptide that is removed on maturation; that stretch reads LVNNNNMVQA. The EGF-like; atypical domain maps to 51 to 97; it reads EAVANINCSEHGRAFLDGIISEGSPKCECNTCYTGPDCSEKIQGCSA. Asn57 is a glycosylation site (N-linked (GlcNAc...) asparagine). 3 disulfides stabilise this stretch: Cys58-Cys77, Cys79-Cys88, and Cys82-Cys95. Chloride is bound at residue 130 to 138; that stretch reads YFFNPVSNF. Asn184 and Asn229 each carry an N-linked (GlcNAc...) asparagine glycan. Lys289 is subject to N6-(pyridoxal phosphate)lysine. Asn366 carries an N-linked (GlcNAc...) asparagine glycan. Cys406 and Cys414 are disulfide-bonded.

The protein belongs to the alliinase family. As to quaternary structure, homodimer. Pyridoxal 5'-phosphate is required as a cofactor. As to expression, expressed in bulb (at protein level). Expressed in shoots.

Its subcellular location is the vacuole. The enzyme catalyses an S-alkyl-L-cysteine S-oxide = an S-alkyl sulfenate + 2-aminoprop-2-enoate. Able to cleave the C-S bond of sulfoxide derivatives of Cys to produce allicin, thus giving rise to all sulfur compounds which are responsible for most of the properties of garlic, such as the specific smell and flavor as well as the health benefits like blood lipid or blood pressure lowering. The chain is Alliin lyase 1 from Allium sativum (Garlic).